A 66-amino-acid chain; its full sequence is Transmembrane protein B66L (66 aa).

A signal peptide spans M1–A20. Topologically, residues F21–Y40 are extracellular. A helical membrane pass occupies residues F41–I61. The Cytoplasmic segment spans residues N62 to L66.

This sequence belongs to the asfivirus B66L family.

The protein resides in the host membrane. The polypeptide is Transmembrane protein B66L (Ornithodoros (relapsing fever ticks)).